The chain runs to 282 residues: Ribosome-inactivating protein bryodin II (282 aa).

A signal peptide spans 1 to 21 (MRSIGFYSVLALYVGAHVTED). The N-linked (GlcNAc...) asparagine glycan is linked to Asn-25. Residue Glu-183 is part of the active site.

The protein belongs to the ribosome-inactivating protein family. Type 1 RIP subfamily.

The catalysed reaction is Endohydrolysis of the N-glycosidic bond at one specific adenosine on the 28S rRNA.. Functionally, ribosome-inactivating protein of type 1, inhibits protein synthesis in animal cells. In Bryonia dioica (Red bryony), this protein is Ribosome-inactivating protein bryodin II.